We begin with the raw amino-acid sequence, 103 residues long: Large ribosomal subunit protein bL36m (103 aa).

This sequence belongs to the bacterial ribosomal protein bL36 family. Component of the mitochondrial large ribosomal subunit (mt-LSU). Mature mammalian 55S mitochondrial ribosomes consist of a small (28S) and a large (39S) subunit. The 28S small subunit contains a 12S ribosomal RNA (12S mt-rRNA) and 30 different proteins. The 39S large subunit contains a 16S rRNA (16S mt-rRNA), a copy of mitochondrial valine transfer RNA (mt-tRNA(Val)), which plays an integral structural role, and 52 different proteins. bL36m has a zinc binding site.

The protein resides in the mitochondrion. In Homo sapiens (Human), this protein is Large ribosomal subunit protein bL36m (MRPL36).